The following is a 336-amino-acid chain: Succinylglutamate desuccinylase (336 aa).

Residues histidine 59, glutamate 62, and histidine 151 each coordinate Zn(2+). The active site involves glutamate 215.

It belongs to the AspA/AstE family. Succinylglutamate desuccinylase subfamily. The cofactor is Zn(2+).

The catalysed reaction is N-succinyl-L-glutamate + H2O = L-glutamate + succinate. It functions in the pathway amino-acid degradation; L-arginine degradation via AST pathway; L-glutamate and succinate from L-arginine: step 5/5. In terms of biological role, transforms N(2)-succinylglutamate into succinate and glutamate. In Pseudomonas fluorescens (strain Pf0-1), this protein is Succinylglutamate desuccinylase.